We begin with the raw amino-acid sequence, 290 residues long: Ribosomal RNA small subunit methyltransferase A (290 aa).

Positions 27, 29, 54, 75, 100, and 125 each coordinate S-adenosyl-L-methionine.

This sequence belongs to the class I-like SAM-binding methyltransferase superfamily. rRNA adenine N(6)-methyltransferase family. RsmA subfamily.

Its subcellular location is the cytoplasm. The enzyme catalyses adenosine(1518)/adenosine(1519) in 16S rRNA + 4 S-adenosyl-L-methionine = N(6)-dimethyladenosine(1518)/N(6)-dimethyladenosine(1519) in 16S rRNA + 4 S-adenosyl-L-homocysteine + 4 H(+). Specifically dimethylates two adjacent adenosines (A1518 and A1519) in the loop of a conserved hairpin near the 3'-end of 16S rRNA in the 30S particle. May play a critical role in biogenesis of 30S subunits. In Streptococcus agalactiae serotype Ia (strain ATCC 27591 / A909 / CDC SS700), this protein is Ribosomal RNA small subunit methyltransferase A.